We begin with the raw amino-acid sequence, 353 residues long: UPF0283 membrane protein YpsIP31758_1791 (353 aa).

3 helical membrane passes run 71-91 (MVTA…VQWV), 101-121 (IALG…GSVV), and 214-234 (ESAL…FIAW).

This sequence belongs to the UPF0283 family.

It is found in the cell inner membrane. The polypeptide is UPF0283 membrane protein YpsIP31758_1791 (Yersinia pseudotuberculosis serotype O:1b (strain IP 31758)).